Here is a 328-residue protein sequence, read N- to C-terminus: Fructokinase-2 (328 aa).

The protein belongs to the carbohydrate kinase PfkB family.

The enzyme catalyses D-fructose + ATP = D-fructose 6-phosphate + ADP + H(+). Its pathway is glycan biosynthesis; starch biosynthesis. Its function is as follows. May play an important role in maintaining the flux of carbon towards starch formation. In Solanum habrochaites (Wild tomato), this protein is Fructokinase-2 (FRK2).